The sequence spans 287 residues: Ribosomal RNA small subunit methyltransferase I (287 aa).

Belongs to the methyltransferase superfamily. RsmI family.

Its subcellular location is the cytoplasm. It carries out the reaction cytidine(1402) in 16S rRNA + S-adenosyl-L-methionine = 2'-O-methylcytidine(1402) in 16S rRNA + S-adenosyl-L-homocysteine + H(+). Catalyzes the 2'-O-methylation of the ribose of cytidine 1402 (C1402) in 16S rRNA. The polypeptide is Ribosomal RNA small subunit methyltransferase I (Streptococcus pyogenes serotype M3 (strain ATCC BAA-595 / MGAS315)).